The following is a 560-amino-acid chain: Potassium-transporting ATPase potassium-binding subunit (560 aa).

A run of 12 helical transmembrane segments spans residues 11–31 (IFLL…VAFF), 63–83 (SYCT…YGLL), 134–154 (FVTM…TALI), 179–199 (LLPL…PQTF), 254–274 (VIEM…YGHA), 282–302 (WVLF…VYNA), 329–349 (FGIP…TGSV), 356–376 (LTPI…VFGG), 379–399 (VGFV…GLMV), 417–437 (LIVI…AIAL), 488–508 (VVML…AGSL), and 530–550 (VILF…VLIL).

This sequence belongs to the KdpA family. As to quaternary structure, the system is composed of three essential subunits: KdpA, KdpB and KdpC.

The protein resides in the cell membrane. Its function is as follows. Part of the high-affinity ATP-driven potassium transport (or Kdp) system, which catalyzes the hydrolysis of ATP coupled with the electrogenic transport of potassium into the cytoplasm. This subunit binds the extracellular potassium ions and delivers the ions to the membrane domain of KdpB through an intramembrane tunnel. This Geobacillus kaustophilus (strain HTA426) protein is Potassium-transporting ATPase potassium-binding subunit.